We begin with the raw amino-acid sequence, 77 residues long: uncharacterized protein (77 aa).

This is an uncharacterized protein from Vaccinia virus (strain Western Reserve) (VACV).